The chain runs to 564 residues: Proline--tRNA ligase (564 aa).

It belongs to the class-II aminoacyl-tRNA synthetase family. ProS type 1 subfamily. Homodimer.

It localises to the cytoplasm. The catalysed reaction is tRNA(Pro) + L-proline + ATP = L-prolyl-tRNA(Pro) + AMP + diphosphate. Its function is as follows. Catalyzes the attachment of proline to tRNA(Pro) in a two-step reaction: proline is first activated by ATP to form Pro-AMP and then transferred to the acceptor end of tRNA(Pro). As ProRS can inadvertently accommodate and process non-cognate amino acids such as alanine and cysteine, to avoid such errors it has two additional distinct editing activities against alanine. One activity is designated as 'pretransfer' editing and involves the tRNA(Pro)-independent hydrolysis of activated Ala-AMP. The other activity is designated 'posttransfer' editing and involves deacylation of mischarged Ala-tRNA(Pro). The misacylated Cys-tRNA(Pro) is not edited by ProRS. This chain is Proline--tRNA ligase, found in Bacillus subtilis (strain 168).